We begin with the raw amino-acid sequence, 172 residues long: L-amino acid oxidase (172 aa).

Residue Gly44–Arg47 coordinates FAD. Substrate-binding residues include Arg47 and His103.

Belongs to the flavin monoamine oxidase family. FIG1 subfamily. In terms of assembly, heterodimer; non-covalently linked. The cofactor is FAD. In terms of processing, N-glycosylated. Expressed by the venom gland.

The protein resides in the secreted. The enzyme catalyses an L-alpha-amino acid + O2 + H2O = a 2-oxocarboxylate + H2O2 + NH4(+). It catalyses the reaction L-leucine + O2 + H2O = 4-methyl-2-oxopentanoate + H2O2 + NH4(+). It carries out the reaction L-phenylalanine + O2 + H2O = 3-phenylpyruvate + H2O2 + NH4(+). The catalysed reaction is L-tryptophan + O2 + H2O = indole-3-pyruvate + H2O2 + NH4(+). The enzyme catalyses L-methionine + O2 + H2O = 4-methylsulfanyl-2-oxobutanoate + H2O2 + NH4(+). It catalyses the reaction L-isoleucine + O2 + H2O = (S)-3-methyl-2-oxopentanoate + H2O2 + NH4(+). It carries out the reaction L-arginine + O2 + H2O = 5-guanidino-2-oxopentanoate + H2O2 + NH4(+). The catalysed reaction is L-tyrosine + O2 + H2O = 3-(4-hydroxyphenyl)pyruvate + H2O2 + NH4(+). Activity is increased by Mn(2+) ions. Inhibited by Zn(2+), Ni(2+), Co(2+), Cu(2+) and Al(3+). No significant activity change by Na(+), K(+), Ca(2+), Mg(2+) and Ba(2+) ions. Both isoform are completely inhibited by L-Cys and reduced glutathione. O-phenanthroline, beta-mercaptoethanol and PMSF completely inhibit the enzymatic activity of LAAOII, but have no activity on LAAOI. Iodoacetic acid inhibits the enzymatic activity of LAAOII by 46% but has no effect on the LAAOI activity. Its function is as follows. Catalyzes an oxidative deamination of predominantly hydrophobic and aromatic L-amino acids, thus producing hydrogen peroxide that may contribute to the diverse toxic effects of this enzyme. Shows high specificity for L-Arg, L-Met, L-Phe, L-Leu, L-Tyr, L-Ile and L-Trp, low specificity for L-Val, L-Ala, L-Asn, L-Gln, and no specificity for L-Pro, L-Ser, L-Thr, L-Cys, L-Gly and L-Asp. Exhibits diverse biological activities, such as hemorrhage, hemolysis, edema, antibacterial and antiparasitic activities, as well as regulation of platelet aggregation. Its effect on platelets is controversial, since it either induces aggregation or inhibits agonist-induced aggregation. These different effects are probably due to different experimental conditions. The protein is L-amino acid oxidase of Cerastes cerastes (Horned desert viper).